A 357-amino-acid polypeptide reads, in one-letter code: Acyl-coenzyme A diphosphatase NUDT19 (357 aa).

The region spanning 10 to 242 (AATVMLAAGW…IWLAPPQFYE (233 aa)) is the Nudix hydrolase domain. The segment at 72–94 (PRFGLGPEPPRQPPFPGLSHGDA) is disordered. A compositionally biased stretch (pro residues) spans 78 to 87 (PEPPRQPPFP). The Nudix box motif lies at 97–118 (AALPDDVALRICAIRETFEEAG). 2 residues coordinate Mg(2+): E112 and E116. K300 is subject to N6-succinyllysine. The Microbody targeting signal motif lies at 355-357 (AHL).

Belongs to the Nudix hydrolase family. Monomer. It depends on Mg(2+) as a cofactor. The cofactor is Mn(2+).

The protein resides in the peroxisome. It carries out the reaction an acyl-CoA + H2O = an acyl-4'-phosphopantetheine + adenosine 3',5'-bisphosphate + 2 H(+). The catalysed reaction is CoA + H2O = (R)-4'-phosphopantetheine + adenosine 3',5'-bisphosphate + 2 H(+). The enzyme catalyses hexanoyl-CoA + H2O = hexanoyl-4'-phosphopantetheine + adenosine 3',5'-bisphosphate + 2 H(+). It catalyses the reaction octanoyl-CoA + H2O = S-octanoyl-4'-phosphopantetheine + adenosine 3',5'-bisphosphate + 2 H(+). It carries out the reaction butanoyl-CoA + H2O = S-butanoyl-4'-phosphopantetheine + adenosine 3',5'-bisphosphate + 2 H(+). The catalysed reaction is propanoyl-CoA + H2O = propanoyl-4'-phosphopantetheine + adenosine 3',5'-bisphosphate + 2 H(+). The enzyme catalyses malonyl-CoA + H2O = malonyl-4'-phosphopantetheine + adenosine 3',5'-bisphosphate + 2 H(+). It catalyses the reaction succinyl-CoA + H2O = succinyl-4'-phosphopantetheine + adenosine 3',5'-bisphosphate + 2 H(+). It carries out the reaction choloyl-CoA + H2O = S-choloyl-4'-phosphopantetheine + adenosine 3',5'-bisphosphate + 2 H(+). The catalysed reaction is 4,8-dimethylnonanoyl-CoA + H2O = S-(4,8-dimethylnonanoyl)-4'-phosphopantetheine + adenosine 3',5'-bisphosphate + 2 H(+). The enzyme catalyses (9Z,12Z,15Z)-octadecatrienoyl-CoA + H2O = S-(9Z,12Z,15Z-octadecatrienoyl)-4'-phosphopantetheine + adenosine 3',5'-bisphosphate + 2 H(+). It catalyses the reaction (9Z,12Z)-octadecadienoyl-CoA + H2O = S-(9Z,12Z-octadecadienoyl)-4'-phosphopantetheine + adenosine 3',5'-bisphosphate + 2 H(+). It carries out the reaction (9Z)-hexadecenoyl-CoA + H2O = S-(9Z-hexadecenoyl)-4'-phosphopantetheine + adenosine 3',5'-bisphosphate + 2 H(+). The catalysed reaction is (9Z)-tetradecenoyl-CoA + H2O = S-(9Z-tetradecenoyl)-4'-phosphopantetheine + adenosine 3',5'-bisphosphate + 2 H(+). The enzyme catalyses (6Z)-octenoyl-CoA + H2O = S-(6Z-octenoyl)-4'-phosphopantetheine + adenosine 3',5'-bisphosphate + 2 H(+). It catalyses the reaction hexadecanoyl-CoA + H2O = S-hexadecanoyl-4'-phosphopantetheine + adenosine 3',5'-bisphosphate + 2 H(+). It carries out the reaction tetradecanoyl-CoA + H2O = tetradecanoyl-4'-phosphopantetheine + adenosine 3',5'-bisphosphate + 2 H(+). The catalysed reaction is dodecanoyl-CoA + H2O = S-dodecanoyl-4'-phosphopantetheine + adenosine 3',5'-bisphosphate + 2 H(+). The enzyme catalyses a 5'-end CoA-ribonucleoside in mRNA + H2O = a 5'-end phospho-adenosine-phospho-ribonucleoside in mRNA + (R)-4'-phosphopantetheine + 2 H(+). Fatty acyl-coenzyme A (CoA) diphosphatase that hydrolyzes fatty acyl-CoA to yield acyl-4'-phosphopantetheine and adenosine 3',5'-bisphosphate. Mediates the hydrolysis of a wide range of CoA esters, including choloyl-CoA and branched-chain fatty-acyl-CoA esters and at low substrate concentrations medium and long-chain fatty-acyl-CoA esters are the primary substrates. Highest activity seen with medium-chain acyl-CoA esters and higher rates of activity seen with the unsaturated acyl-CoA esters compared with the saturated esters. Exhibits decapping activity towards dpCoA-capped RNAs in vitro. The chain is Acyl-coenzyme A diphosphatase NUDT19 (Nudt19) from Mus caroli (Ryukyu mouse).